Reading from the N-terminus, the 320-residue chain is MIKKIGVLTSGGDAPGMNAAIRGVVRSALTEGLEVMGIYDGYLGLYEDRMVQLDRYSVSDMINRGGTFLGSARFPEFRDENIRAVAIENLKKRGIDALVVIGGDGSYMGAMRLTEMGFPCIGLPGTIDNDIKGTDYTIGFFTALSTVVEAIDRLRDTSSSHQRISVVEVMGRYCGDLTLAAAIAGGCEFVVVPEVEFSREDLVNEIKAGIAKGKKHAIVAITEHMCDVDELAHFIEKETGRETRATVLGHIQRGGSPVPYDRILASRMGAYAIDLLLAGYGGRCVGIQNEQLVHHDIIDAIENMKRPFKGDWLDCAKKLY.

Residue G12 participates in ATP binding. ADP is bound by residues 22–26 (RGVVR) and 55–60 (RYSVSD). ATP is bound by residues 73–74 (RF) and 103–106 (GDGS). Mg(2+) is bound at residue D104. 126–128 (TID) is a substrate binding site. The active-site Proton acceptor is the D128. R155 provides a ligand contact to ADP. Substrate contacts are provided by residues R163 and 170-172 (MGR). ADP is bound by residues 186-188 (GCE), K212, and 214-216 (KKH). Residues E223, R244, and 250 to 253 (HIQR) contribute to the substrate site.

The protein belongs to the phosphofructokinase type A (PFKA) family. ATP-dependent PFK group I subfamily. Prokaryotic clade 'B1' sub-subfamily. In terms of assembly, homotetramer. Requires Mg(2+) as cofactor.

Its subcellular location is the cytoplasm. The enzyme catalyses beta-D-fructose 6-phosphate + ATP = beta-D-fructose 1,6-bisphosphate + ADP + H(+). It functions in the pathway carbohydrate degradation; glycolysis; D-glyceraldehyde 3-phosphate and glycerone phosphate from D-glucose: step 3/4. With respect to regulation, allosterically activated by ADP and other diphosphonucleosides, and allosterically inhibited by phosphoenolpyruvate. In terms of biological role, catalyzes the phosphorylation of D-fructose 6-phosphate to fructose 1,6-bisphosphate by ATP, the first committing step of glycolysis. The chain is ATP-dependent 6-phosphofructokinase isozyme 1 from Shigella boydii serotype 18 (strain CDC 3083-94 / BS512).